A 356-amino-acid polypeptide reads, in one-letter code: Holliday junction branch migration complex subunit RuvB (356 aa).

The interval threonine 4–tyrosine 190 is large ATPase domain (RuvB-L). Residues leucine 29, arginine 30, glycine 71, lysine 74, threonine 75, threonine 76, glutamate 137 to tyrosine 139, arginine 180, tyrosine 190, and arginine 227 each bind ATP. Threonine 75 serves as a coordination point for Mg(2+). Residues aspartate 191–aspartate 261 form a small ATPAse domain (RuvB-S) region. The head domain (RuvB-H) stretch occupies residues proline 264–arginine 356. DNA is bound by residues arginine 300, arginine 319, and arginine 324.

It belongs to the RuvB family. As to quaternary structure, homohexamer. Forms an RuvA(8)-RuvB(12)-Holliday junction (HJ) complex. HJ DNA is sandwiched between 2 RuvA tetramers; dsDNA enters through RuvA and exits via RuvB. An RuvB hexamer assembles on each DNA strand where it exits the tetramer. Each RuvB hexamer is contacted by two RuvA subunits (via domain III) on 2 adjacent RuvB subunits; this complex drives branch migration. In the full resolvosome a probable DNA-RuvA(4)-RuvB(12)-RuvC(2) complex forms which resolves the HJ.

Its subcellular location is the cytoplasm. It catalyses the reaction ATP + H2O = ADP + phosphate + H(+). Functionally, the RuvA-RuvB-RuvC complex processes Holliday junction (HJ) DNA during genetic recombination and DNA repair, while the RuvA-RuvB complex plays an important role in the rescue of blocked DNA replication forks via replication fork reversal (RFR). RuvA specifically binds to HJ cruciform DNA, conferring on it an open structure. The RuvB hexamer acts as an ATP-dependent pump, pulling dsDNA into and through the RuvAB complex. RuvB forms 2 homohexamers on either side of HJ DNA bound by 1 or 2 RuvA tetramers; 4 subunits per hexamer contact DNA at a time. Coordinated motions by a converter formed by DNA-disengaged RuvB subunits stimulates ATP hydrolysis and nucleotide exchange. Immobilization of the converter enables RuvB to convert the ATP-contained energy into a lever motion, pulling 2 nucleotides of DNA out of the RuvA tetramer per ATP hydrolyzed, thus driving DNA branch migration. The RuvB motors rotate together with the DNA substrate, which together with the progressing nucleotide cycle form the mechanistic basis for DNA recombination by continuous HJ branch migration. Branch migration allows RuvC to scan DNA until it finds its consensus sequence, where it cleaves and resolves cruciform DNA. The sequence is that of Holliday junction branch migration complex subunit RuvB from Burkholderia thailandensis (strain ATCC 700388 / DSM 13276 / CCUG 48851 / CIP 106301 / E264).